The sequence spans 313 residues: Metal ABC transporter substrate-binding lipoprotein (313 aa).

Positions 1 to 23 are cleaved as a signal peptide; the sequence is MIEKYKNILITFIALAAIVFLVG. C24 is lipidated: N-palmitoyl cysteine. C24 is lipidated: S-diacylglycerol cysteine. Zn(2+) is bound by residues H71, H143, E209, and D284.

The protein belongs to the bacterial solute-binding protein 9 family. Lipoprotein receptor antigen (Lrai) subfamily.

It is found in the cell membrane. Its function is as follows. Part of an ATP-driven transport system for a metal; probably for manganese. The chain is Metal ABC transporter substrate-binding lipoprotein (mtsA) from Lactococcus lactis subsp. lactis (strain IL1403) (Streptococcus lactis).